Here is a 798-residue protein sequence, read N- to C-terminus: MSSTAHPTNLAPSGNGSAACVHCHRRKVRCDARLVGLPCSNCRSAGKTDCQIHEKKKKLAVRSILDPVPIRCRPPNPEEAPKPISSLSPSSEPPNAFTTALRAVQSDITAPSGVANRVAHIRSRSSQYDTKGTRSNNNSGNNTQYQNVLPEPDSPPYSRPAASDPSEGESRADIEKRLVNLIDGEASDSRAIQRGVRAIYVGHELSNMSFLIRQQRDTGDDVYHFAGNEIPRRQLRTGHDQLLMDALTLPEPALADELVHAYFAQVNPGYPIVEEELFMSQYRNRDPADAPPILLLQTILLVGAHVTRPKSERDTLKDIFFRRAKWLFDNRIERNRDILVQAALLLTWHSDLADDDVSANAHYWIGIAARIATGLGMHRNPVCSRFVPRDRRMWRRLWYILVQFDVMVSLSYGRPQALNLEDSDVSPLTFSDFEGCGARVQADFVIHFSELCTMISYIVRERFGLRISAERRKAALLEADEALANWSLRLPDRLRLRASDMDPWSAMLHLTYNNFLILLHRPHPRASAYSDDYGPHDAEICSAAAGVIASIFEELRIHDRLKQVWYSGVHTLFTAMIQVRVELRFSNPVLAINALRRFDSASYSLRELAQYWSHASTILRLFEESRRLQEDLRTTTSDRPRRFSNLSNNSTNSPASQQKNTSGIPHLANINSSDATPPSAPSIPPLQPSSQLSYEVPTTESAHHNPRSQPTLSAHTHTYTTQPFDTWIPSNNLTPMDTVDNSREMLDWRQLFSFTDLEGPVLPSTMEGITELEDEWRQIYWQETPMSDLLQDGGWMHG.

The segment at residues 20–50 is a DNA-binding region (zn(2)-C6 fungal-type); that stretch reads CVHCHRRKVRCDARLVGLPCSNCRSAGKTDC. 3 disordered regions span residues 68–96, 115–172, and 632–714; these read VPIR…PPNA, ANRV…ESRA, and LRTT…TLSA. Low complexity-rich tracts occupy residues 82–94 and 133–147; these read KPIS…SEPP and TRSN…QYQN. Over residues 632 to 641 the composition is skewed to basic and acidic residues; the sequence is LRTTTSDRPR. The segment covering 644 to 663 has biased composition (polar residues); that stretch reads SNLSNNSTNSPASQQKNTSG. Positions 678–687 are enriched in pro residues; it reads PSAPSIPPLQ.

Its subcellular location is the nucleus. Functionally, positively regulates the expression of 5 genes involved in the catabolism of certain amides (amdS), omega amino acids (gatA and gabA), and lactams (lamA and lamB) in the presence of omega amino acid inducers. In Emericella nidulans (strain FGSC A4 / ATCC 38163 / CBS 112.46 / NRRL 194 / M139) (Aspergillus nidulans), this protein is Acetamidase regulatory protein (amdR).